Reading from the N-terminus, the 70-residue chain is UPF0426 protein ssl0294 (70 aa).

Belongs to the UPF0426 family.

This is UPF0426 protein ssl0294 from Synechocystis sp. (strain ATCC 27184 / PCC 6803 / Kazusa).